Consider the following 251-residue polypeptide: Ubiquinone/menaquinone biosynthesis C-methyltransferase UbiE (251 aa).

S-adenosyl-L-methionine contacts are provided by residues Thr-74, Asp-95, 123–124, and Ser-140; that span reads NA.

Belongs to the class I-like SAM-binding methyltransferase superfamily. MenG/UbiE family.

It catalyses the reaction a 2-demethylmenaquinol + S-adenosyl-L-methionine = a menaquinol + S-adenosyl-L-homocysteine + H(+). It carries out the reaction a 2-methoxy-6-(all-trans-polyprenyl)benzene-1,4-diol + S-adenosyl-L-methionine = a 5-methoxy-2-methyl-3-(all-trans-polyprenyl)benzene-1,4-diol + S-adenosyl-L-homocysteine + H(+). It functions in the pathway quinol/quinone metabolism; menaquinone biosynthesis; menaquinol from 1,4-dihydroxy-2-naphthoate: step 2/2. It participates in cofactor biosynthesis; ubiquinone biosynthesis. Methyltransferase required for the conversion of demethylmenaquinol (DMKH2) to menaquinol (MKH2) and the conversion of 2-polyprenyl-6-methoxy-1,4-benzoquinol (DDMQH2) to 2-polyprenyl-3-methyl-6-methoxy-1,4-benzoquinol (DMQH2). The chain is Ubiquinone/menaquinone biosynthesis C-methyltransferase UbiE from Photorhabdus laumondii subsp. laumondii (strain DSM 15139 / CIP 105565 / TT01) (Photorhabdus luminescens subsp. laumondii).